Reading from the N-terminus, the 214-residue chain is Probable transaldolase (214 aa).

The Schiff-base intermediate with substrate role is filled by K83.

It belongs to the transaldolase family. Type 3B subfamily.

The protein resides in the cytoplasm. The catalysed reaction is D-sedoheptulose 7-phosphate + D-glyceraldehyde 3-phosphate = D-erythrose 4-phosphate + beta-D-fructose 6-phosphate. It functions in the pathway carbohydrate degradation; pentose phosphate pathway; D-glyceraldehyde 3-phosphate and beta-D-fructose 6-phosphate from D-ribose 5-phosphate and D-xylulose 5-phosphate (non-oxidative stage): step 2/3. Its function is as follows. Transaldolase is important for the balance of metabolites in the pentose-phosphate pathway. This chain is Probable transaldolase, found in Maridesulfovibrio salexigens (strain ATCC 14822 / DSM 2638 / NCIMB 8403 / VKM B-1763) (Desulfovibrio salexigens).